A 103-amino-acid polypeptide reads, in one-letter code: MAHYKAADSKREQFRRYLEKSGVLDTLTKVLVALYEEPEKPNSALDFLKHHLGAATPENPEIELLRLELAEMKEKYEAIVEENKKLKAKLAQYEPPQEEKRAE.

The protein belongs to the AMY1 family. As to quaternary structure, binds via its C-terminal region to the N-terminal region of MYC. Associates with AKAP1/S-AKAP84. Interacts with MYCBPAP. Interacts with CFAP91. Highly expressed in heart, placenta, pancreas, skeletal muscle and kidney. Also present at low levels in lung.

It is found in the cytoplasm. The protein localises to the nucleus. Its subcellular location is the mitochondrion. May control the transcriptional activity of MYC. Stimulates the activation of E box-dependent transcription by MYC. This is c-Myc-binding protein from Homo sapiens (Human).